A 499-amino-acid chain; its full sequence is Maturase K (499 aa).

The protein belongs to the intron maturase 2 family. MatK subfamily.

It localises to the plastid. Its subcellular location is the chloroplast. Functionally, usually encoded in the trnK tRNA gene intron. Probably assists in splicing its own and other chloroplast group II introns. The chain is Maturase K from Macrozamia communis (Burrawang palm).